Reading from the N-terminus, the 292-residue chain is Tetratricopeptide repeat protein 1 (292 aa).

Composition is skewed to basic and acidic residues over residues 1-12 (MEEKSEDCKVPE) and 47-64 (KAAE…ECFH). The tract at residues 1 to 125 (MEEKSEDCKV…SAKLKEEGNE (125 aa)) is disordered. Residues 88–98 (SSSELDEEYLI) are compositionally biased toward acidic residues. Ser90 carries the post-translational modification Phosphoserine. Over residues 99–125 (ELEKNMPEEEKQKRREESAKLKEEGNE) the composition is skewed to basic and acidic residues. TPR repeat units lie at residues 116-149 (SAKL…CPAC), 155-188 (SVLF…NPTY), and 189-222 (IRAI…DPSV).

As to quaternary structure, interacts with the GAP domain of NF1. Interacts (via TPR repeats) with HSP90AA1 and HSPA8.

In Mus musculus (Mouse), this protein is Tetratricopeptide repeat protein 1 (Ttc1).